Reading from the N-terminus, the 250-residue chain is Flavin-dependent thymidylate synthase (250 aa).

The ThyX domain maps to 7–233; the sequence is LSVELIACSS…PTVFGDFQVE (227 aa). Residues 92 to 95, 103 to 107, and Arg172 each bind dUMP; these read ELVR and QLSQR. FAD contacts are provided by residues 95 to 97 and Gln103; that span reads RHR. Positions 95–105 match the ThyX motif motif; sequence RHRHFSFSQLS. Residues 188–190 and His194 each bind FAD; that span reads NFR. A dUMP-binding site is contributed by Arg199. Arg199 (involved in ionization of N3 of dUMP, leading to its activation) is an active-site residue.

It belongs to the thymidylate synthase ThyX family. In terms of assembly, homotetramer. FAD serves as cofactor.

It carries out the reaction dUMP + (6R)-5,10-methylene-5,6,7,8-tetrahydrofolate + NADPH + H(+) = dTMP + (6S)-5,6,7,8-tetrahydrofolate + NADP(+). The protein operates within pyrimidine metabolism; dTTP biosynthesis. In terms of biological role, catalyzes the reductive methylation of 2'-deoxyuridine-5'-monophosphate (dUMP) to 2'-deoxythymidine-5'-monophosphate (dTMP) while utilizing 5,10-methylenetetrahydrofolate (mTHF) as the methyl donor, and NADPH and FADH(2) as the reductant. This chain is Flavin-dependent thymidylate synthase, found in Corynebacterium efficiens (strain DSM 44549 / YS-314 / AJ 12310 / JCM 11189 / NBRC 100395).